The sequence spans 60 residues: Sec-independent protein translocase protein TatA (60 aa).

Residues 1–21 (MAGLGVTELLIILAIVIVLFG) traverse the membrane as a helical segment.

It belongs to the TatA/E family. As to quaternary structure, forms a complex with TatC.

Its subcellular location is the cell membrane. Its function is as follows. Part of the twin-arginine translocation (Tat) system that transports large folded proteins containing a characteristic twin-arginine motif in their signal peptide across membranes. TatA could form the protein-conducting channel of the Tat system. The chain is Sec-independent protein translocase protein TatA from Herpetosiphon aurantiacus (strain ATCC 23779 / DSM 785 / 114-95).